A 166-amino-acid polypeptide reads, in one-letter code: Lymphocyte antigen 6G6e (166 aa).

A signal peptide spans 1 to 18 (MGPSSAFLGVLFLSGTLG). Positions 28 to 151 (LRCYTCSFAK…PPPNLPLMTL (124 aa)) constitute a UPAR/Ly6 domain. Cystine bridges form between cysteine 30–cysteine 52, cysteine 33–cysteine 39, cysteine 110–cysteine 129, and cysteine 130–cysteine 135.

Interacts with CHRNA4. In terms of processing, O-glycosylated. Contains sialic acid residues.

Its subcellular location is the cell surface. The protein resides in the cell membrane. The protein localises to the cell projection. Believed to act as a modulator of nicotinic acetylcholine receptors (nAChRs) activity. In vitro potentiates alpha-3:beta-4-containing nAChRs maximum response by increasing peak current and slowing down receptor desensitization; the activity is dependent on its cell surface localization. The polypeptide is Lymphocyte antigen 6G6e (Ly6g6e) (Mus musculus (Mouse)).